The primary structure comprises 287 residues: MSGLRLIVVSGLSGSGKSVALHTLEDAGYYCIDNLPVSLIGELARYAQNRDAPTGERFAVGLDARNPPHDLQCLPETLTALREQGIATEVLFLYAEDSILMRRYSETRRRHPLAEGDQPLADALRAERTLLEPLREVADWSIDTSRTTVHDLRGLISERVAGERSGLSVLVQSFGFKHGIPTDADYVFDARCLPNPHWEPQLRAYTGCDDCVRAFLESQPETEILFGQIDTLIRYWLPVHQQAGRSYLTVAVGCTGGQHRSVYLAERLAESLQEGCSHVSLRHRELS.

An ATP-binding site is contributed by 11–18; sequence GLSGSGKS. GTP is bound at residue 63-66; sequence DARN.

The protein belongs to the RapZ-like family.

In terms of biological role, displays ATPase and GTPase activities. This chain is Nucleotide-binding protein Hhal_2130, found in Halorhodospira halophila (strain DSM 244 / SL1) (Ectothiorhodospira halophila (strain DSM 244 / SL1)).